The primary structure comprises 261 residues: Imidazole glycerol phosphate synthase subunit HisF (261 aa).

Residues aspartate 12 and aspartate 131 contribute to the active site.

This sequence belongs to the HisA/HisF family. Heterodimer of HisH and HisF.

The protein localises to the cytoplasm. It catalyses the reaction 5-[(5-phospho-1-deoxy-D-ribulos-1-ylimino)methylamino]-1-(5-phospho-beta-D-ribosyl)imidazole-4-carboxamide + L-glutamine = D-erythro-1-(imidazol-4-yl)glycerol 3-phosphate + 5-amino-1-(5-phospho-beta-D-ribosyl)imidazole-4-carboxamide + L-glutamate + H(+). The protein operates within amino-acid biosynthesis; L-histidine biosynthesis; L-histidine from 5-phospho-alpha-D-ribose 1-diphosphate: step 5/9. Functionally, IGPS catalyzes the conversion of PRFAR and glutamine to IGP, AICAR and glutamate. The HisF subunit catalyzes the cyclization activity that produces IGP and AICAR from PRFAR using the ammonia provided by the HisH subunit. The polypeptide is Imidazole glycerol phosphate synthase subunit HisF (Brucella abortus (strain S19)).